We begin with the raw amino-acid sequence, 393 residues long: Phosphopentomutase (393 aa).

The Mn(2+) site is built by Asp14, Asp287, His292, Asp328, His329, and His340.

This sequence belongs to the phosphopentomutase family. It depends on Mn(2+) as a cofactor.

The protein localises to the cytoplasm. It catalyses the reaction 2-deoxy-alpha-D-ribose 1-phosphate = 2-deoxy-D-ribose 5-phosphate. It carries out the reaction alpha-D-ribose 1-phosphate = D-ribose 5-phosphate. It participates in carbohydrate degradation; 2-deoxy-D-ribose 1-phosphate degradation; D-glyceraldehyde 3-phosphate and acetaldehyde from 2-deoxy-alpha-D-ribose 1-phosphate: step 1/2. In terms of biological role, isomerase that catalyzes the conversion of deoxy-ribose 1-phosphate (dRib-1-P) and ribose 1-phosphate (Rib-1-P) to deoxy-ribose 5-phosphate (dRib-5-P) and ribose 5-phosphate (Rib-5-P), respectively. This chain is Phosphopentomutase, found in Geobacillus stearothermophilus (Bacillus stearothermophilus).